The following is an 896-amino-acid chain: Translation initiation factor IF-2 (896 aa).

The disordered stretch occupies residues 49–310 (LKKEHGDTSG…MQQGFDKSAT (262 aa)). The span at 57-66 (SGETEPTRLT) shows a compositional bias: polar residues. Composition is skewed to basic and acidic residues over residues 101–174 (STIE…KDMN), 184–240 (AKKE…KSAD), and 250–263 (REAE…DEKA). The span at 284–295 (RNQRGRGGKGKL) shows a compositional bias: basic residues. The 170-residue stretch at 395–564 (GRAPVVTIMG…LLQSEVLELT (170 aa)) folds into the tr-type G domain. Residues 404-411 (GHVDHGKT) are G1. 404 to 411 (GHVDHGKT) contacts GTP. Positions 429-433 (GITQH) are G2. The tract at residues 450–453 (DTPG) is G3. GTP-binding positions include 450 to 454 (DTPGH) and 504 to 507 (NKID). The tract at residues 504–507 (NKID) is G4. The tract at residues 540–542 (SAK) is G5.

The protein belongs to the TRAFAC class translation factor GTPase superfamily. Classic translation factor GTPase family. IF-2 subfamily.

The protein resides in the cytoplasm. Functionally, one of the essential components for the initiation of protein synthesis. Protects formylmethionyl-tRNA from spontaneous hydrolysis and promotes its binding to the 30S ribosomal subunits. Also involved in the hydrolysis of GTP during the formation of the 70S ribosomal complex. In Vibrio atlanticus (strain LGP32) (Vibrio splendidus (strain Mel32)), this protein is Translation initiation factor IF-2.